We begin with the raw amino-acid sequence, 345 residues long: Growth hormone-inducible transmembrane protein (345 aa).

The N-terminal 45 residues, 1-45 (MLAARLVCLRTLPSRVFHPAFTKASPVVKNSITKNQWLLTPSREY), are a transit peptide targeting the mitochondrion. At 46–82 (ATKTRIGIRRGRTGQELKEAALEPSMEKIFKIDQMGR) the chain is on the mitochondrial matrix side. A helical membrane pass occupies residues 83 to 103 (WFVAGGAAVGLGALCYYGLGL). Over 104 to 125 (SNEIGAIEKAVIWPQYVKDRIH) the chain is Mitochondrial intermembrane. Residues 126 to 146 (STYMYLAGSIGLTALSAIAIS) traverse the membrane as a helical segment. Topologically, residues 147-159 (RTPVLMNFMMRGS) are mitochondrial matrix. A helical membrane pass occupies residues 160 to 180 (WVTIGVTFAAMVGAGMLVRSI). Residues 181-190 (PYDQSPGPKH) are Mitochondrial intermembrane-facing. A helical membrane pass occupies residues 191–211 (LAWLLHSGVMGAVVAPLTILG). Over 212–213 (GP) the chain is Mitochondrial matrix. The helical transmembrane segment at 214–234 (LLIRAAWYTAGIVGGLSTVAM) threads the bilayer. The Mitochondrial intermembrane segment spans residues 235-244 (CAPSEKFLNM). Residues 245–265 (GAPLGVGLGLVFVSSLGSMFL) form a helical membrane-spanning segment. Topologically, residues 266 to 271 (PPTTVA) are mitochondrial matrix. A helical transmembrane segment spans residues 272–292 (GATLYSVAMYGGLVLFSMFLL). The Mitochondrial intermembrane segment spans residues 293-345 (YDTQKVIKRAEVSPMYGVQKYDPINSMLSIYMDTLNIFMRVATMLATGGNRKK).

The protein belongs to the BI1 family. Interacts with LETM1. Interacts with AFG3L2. In terms of processing, undergoes AFG3L2-mediated proteolytic degradation, upon hyperpolarization of mitochondria.

Its subcellular location is the mitochondrion inner membrane. It catalyses the reaction Ca(2+)(in) + 2 H(+)(out) = Ca(2+)(out) + 2 H(+)(in). The catalysed reaction is K(+)(in) + H(+)(out) = K(+)(out) + H(+)(in). In terms of biological role, plays an important role in maintenance of mitochondrial morphology and in mediating either calcium or potassium/proton antiport. Mediates proton-dependent calcium efflux from mitochondrion. Also functions as an electroneutral mitochondrial proton/potassium exchanger. Required for the mitochondrial tubular network and cristae organization. Involved in apoptotic release of cytochrome c. Inhibits the proteolytic activity of AFG3L2, stimulating respiration and stabilizing respiratory enzymes in actively respiring mitochondria. However, when mitochondria become hyperpolarized, GHITM loses its inhibitory activity toward AFG3L2 and the now the active AFG3L2 turns first on GHITM and, if hyperpolarization persists, on other proteins of the mitochondria, leading to a broad remodeling of the mitochondrial proteome. The protein is Growth hormone-inducible transmembrane protein (GHITM) of Homo sapiens (Human).